The following is a 348-amino-acid chain: Zinc finger and SCAN domain-containing protein 16 (348 aa).

Positions 41–123 constitute an SCAN box domain; it reads RQHFRKLCYQ…TVLEDLEREL (83 aa). Disordered regions lie at residues 160–184 and 205–226; these read PKKT…TKNE and RLNK…EGRS. Residues 163–184 show a composition bias toward basic and acidic residues; that stretch reads TQLEQEAGKPQRNGDKTRTKNE. C2H2-type zinc fingers lie at residues 236–258, 264–286, 292–314, and 320–342; these read YKCD…RRTH, YKCD…HRVH, YKCK…QRIH, and YECD…QRIH.

Belongs to the krueppel C2H2-type zinc-finger protein family.

It is found in the nucleus. Functionally, may be involved in transcriptional regulation. In Homo sapiens (Human), this protein is Zinc finger and SCAN domain-containing protein 16 (ZSCAN16).